Consider the following 233-residue polypeptide: MKSAVLVFPGINRERDMARALRLVSGREPAMVWHAETSLPEGTDLVVAPGGFSYGDYLRCGAIAARAPVMDAVRAFASDGGLVLGVCNGFQILCESGLLPGILMRNARLKFICHDVHLRVERSDTPFTRGYNAGQVIRVPVAHGEGNYAADEDTIRRLEGEGRVLYRYCSASGEVGDTHNINGAAQSIAGIVNERGNVLGMMPHPENHVEDIMGCTDGRGLFAGLVAHLERAA.

The Glutamine amidotransferase type-1 domain maps to 3-233 (SAVLVFPGIN…GLVAHLERAA (231 aa)). Cysteine 87 serves as the catalytic Nucleophile. Residues histidine 204 and glutamate 206 contribute to the active site.

As to quaternary structure, part of the FGAM synthase complex composed of 1 PurL, 1 PurQ and 2 PurS subunits.

It localises to the cytoplasm. The catalysed reaction is N(2)-formyl-N(1)-(5-phospho-beta-D-ribosyl)glycinamide + L-glutamine + ATP + H2O = 2-formamido-N(1)-(5-O-phospho-beta-D-ribosyl)acetamidine + L-glutamate + ADP + phosphate + H(+). It carries out the reaction L-glutamine + H2O = L-glutamate + NH4(+). The protein operates within purine metabolism; IMP biosynthesis via de novo pathway; 5-amino-1-(5-phospho-D-ribosyl)imidazole from N(2)-formyl-N(1)-(5-phospho-D-ribosyl)glycinamide: step 1/2. Its function is as follows. Part of the phosphoribosylformylglycinamidine synthase complex involved in the purines biosynthetic pathway. Catalyzes the ATP-dependent conversion of formylglycinamide ribonucleotide (FGAR) and glutamine to yield formylglycinamidine ribonucleotide (FGAM) and glutamate. The FGAM synthase complex is composed of three subunits. PurQ produces an ammonia molecule by converting glutamine to glutamate. PurL transfers the ammonia molecule to FGAR to form FGAM in an ATP-dependent manner. PurS interacts with PurQ and PurL and is thought to assist in the transfer of the ammonia molecule from PurQ to PurL. This Nitrobacter winogradskyi (strain ATCC 25391 / DSM 10237 / CIP 104748 / NCIMB 11846 / Nb-255) protein is Phosphoribosylformylglycinamidine synthase subunit PurQ.